We begin with the raw amino-acid sequence, 228 residues long: Biosynthetic peptidoglycan transglycosylase (228 aa).

A helical transmembrane segment spans residues Ile-8–Ile-28.

Belongs to the glycosyltransferase 51 family.

It localises to the cell inner membrane. The catalysed reaction is [GlcNAc-(1-&gt;4)-Mur2Ac(oyl-L-Ala-gamma-D-Glu-L-Lys-D-Ala-D-Ala)](n)-di-trans,octa-cis-undecaprenyl diphosphate + beta-D-GlcNAc-(1-&gt;4)-Mur2Ac(oyl-L-Ala-gamma-D-Glu-L-Lys-D-Ala-D-Ala)-di-trans,octa-cis-undecaprenyl diphosphate = [GlcNAc-(1-&gt;4)-Mur2Ac(oyl-L-Ala-gamma-D-Glu-L-Lys-D-Ala-D-Ala)](n+1)-di-trans,octa-cis-undecaprenyl diphosphate + di-trans,octa-cis-undecaprenyl diphosphate + H(+). The protein operates within cell wall biogenesis; peptidoglycan biosynthesis. Its function is as follows. Peptidoglycan polymerase that catalyzes glycan chain elongation from lipid-linked precursors. This Chromobacterium violaceum (strain ATCC 12472 / DSM 30191 / JCM 1249 / CCUG 213 / NBRC 12614 / NCIMB 9131 / NCTC 9757 / MK) protein is Biosynthetic peptidoglycan transglycosylase.